A 486-amino-acid polypeptide reads, in one-letter code: Membrane-bound lytic murein transglycosylase F (486 aa).

Residues 1 to 28 (MFAHTLFRKRCAIWLLAIGIFLMLGSCA) form the signal peptide. The interval 29–267 (EKPSELERIK…RLRERYYGHV (239 aa)) is non-LT domain. The LT domain stretch occupies residues 268 to 486 (DVLGYVGAYA…TDLMEELPPL (219 aa)). Glutamate 314 is a catalytic residue.

The protein in the N-terminal section; belongs to the bacterial solute-binding protein 3 family. In the C-terminal section; belongs to the transglycosylase Slt family.

It is found in the cell outer membrane. It carries out the reaction Exolytic cleavage of the (1-&gt;4)-beta-glycosidic linkage between N-acetylmuramic acid (MurNAc) and N-acetylglucosamine (GlcNAc) residues in peptidoglycan, from either the reducing or the non-reducing ends of the peptidoglycan chains, with concomitant formation of a 1,6-anhydrobond in the MurNAc residue.. Functionally, murein-degrading enzyme that degrades murein glycan strands and insoluble, high-molecular weight murein sacculi, with the concomitant formation of a 1,6-anhydromuramoyl product. Lytic transglycosylases (LTs) play an integral role in the metabolism of the peptidoglycan (PG) sacculus. Their lytic action creates space within the PG sacculus to allow for its expansion as well as for the insertion of various structures such as secretion systems and flagella. In Stutzerimonas stutzeri (strain A1501) (Pseudomonas stutzeri), this protein is Membrane-bound lytic murein transglycosylase F.